Reading from the N-terminus, the 127-residue chain is Translation initiation factor 5A (127 aa).

The residue at position 35 (Lys-35) is a Hypusine.

This sequence belongs to the eIF-5A family.

Its subcellular location is the cytoplasm. In terms of biological role, functions by promoting the formation of the first peptide bond. In Methanospirillum hungatei JF-1 (strain ATCC 27890 / DSM 864 / NBRC 100397 / JF-1), this protein is Translation initiation factor 5A.